We begin with the raw amino-acid sequence, 412 residues long: Inositol polyphosphate-5-phosphatase A (412 aa).

The S-farnesyl cysteine moiety is linked to residue Cys-409. A propeptide spans 410–412 (VVQ) (removed in mature form).

It belongs to the inositol 1,4,5-trisphosphate 5-phosphatase type I family. In terms of assembly, interacts with TASOR. Isoprenylation at Cys-409 is required for localization at the membrane.

The protein resides in the cell membrane. The protein localises to the cell projection. It is found in the dendrite. The enzyme catalyses 1D-myo-inositol 1,4,5-trisphosphate + H2O = 1D-myo-inositol 1,4-bisphosphate + phosphate. It carries out the reaction 1D-myo-inositol 1,3,4,5-tetrakisphosphate + H2O = 1D-myo-inositol 1,3,4-trisphosphate + phosphate. Inhibited by EDTA and 2,3-bisphosphoglycerate. Its function is as follows. Phosphatase that specifically hydrolyzes the 5-phosphate of inositol 1,4,5-trisphosphate to inositol 1,4-bisphosphate, and inositol 1,3,4,5-tetrasphosphate to inositol 1,3,4-trisphosphate. Plays a crucial role in the survival of cerebellar Purkinje cells. The chain is Inositol polyphosphate-5-phosphatase A (INPP5A) from Canis lupus familiaris (Dog).